The chain runs to 386 residues: D-galactosamine-6-phosphate deaminase AgaS (386 aa).

SIS domains follow at residues 59-217 (LTPI…CIEM) and 222-366 (LTER…PDNP).

This sequence belongs to the SIS family. AgaS subfamily.

The protein localises to the cytoplasm. It catalyses the reaction D-galactosamine 6-phosphate + H2O = D-tagatopyranose 1-phosphate + NH4(+). The catalysed reaction is alpha-D-glucosamine 6-phosphate + H2O = beta-D-fructose 6-phosphate + NH4(+). Its function is as follows. Involved in the pathway of N-acetyl-D-galactosamine degradation. Catalyzes the conversion of D-galactosamine 6-phosphate (GalN-6-P) to D-tagatofuranose 6-phosphate (Tag-6-P). It can also catalyze the conversion of D-glucosamine 6-phosphate. The protein is D-galactosamine-6-phosphate deaminase AgaS of Shewanella sp. (strain ANA-3).